The primary structure comprises 128 residues: Large ribosomal subunit protein bL20 (128 aa).

The protein belongs to the bacterial ribosomal protein bL20 family.

In terms of biological role, binds directly to 23S ribosomal RNA and is necessary for the in vitro assembly process of the 50S ribosomal subunit. It is not involved in the protein synthesizing functions of that subunit. The sequence is that of Large ribosomal subunit protein bL20 from Corynebacterium efficiens (strain DSM 44549 / YS-314 / AJ 12310 / JCM 11189 / NBRC 100395).